Here is a 291-residue protein sequence, read N- to C-terminus: 3-hydroxy-5-phosphonooxypentane-2,4-dione thiolase (291 aa).

Lys-203 (schiff-base intermediate with substrate) is an active-site residue.

This sequence belongs to the DeoC/FbaB aldolase family. In terms of assembly, homodecamer.

It is found in the cytoplasm. It carries out the reaction dihydroxyacetone phosphate + acetyl-CoA = 3-hydroxy-2,4-dioxopentyl phosphate + CoA. In terms of biological role, involved in the degradation of phospho-AI-2, thereby terminating induction of the lsr operon and closing the AI-2 signaling cycle. Catalyzes the transfer of an acetyl moiety from 3-hydroxy-5-phosphonooxypentane-2,4-dione to CoA to form glycerone phosphate and acetyl-CoA. The protein is 3-hydroxy-5-phosphonooxypentane-2,4-dione thiolase of Escherichia coli O139:H28 (strain E24377A / ETEC).